The following is a 445-amino-acid chain: Dihydroorotate dehydrogenase (quinone), mitochondrial (445 aa).

A mitochondrion-targeting transit peptide spans 1-16; that stretch reads MNSGFPRILSKKLFTL. The helical transmembrane segment at 39 to 56 threads the bilayer; the sequence is LLKYTVGIAIGSFAGFYF. FMN contacts are provided by residues 124–128 and Ser-148; that span reads AGLDK. Lys-128 serves as a coordination point for substrate. 173 to 177 contacts substrate; sequence NRYGF. Residues Asn-221 and Asn-251 each coordinate FMN. Residue 251–256 coordinates substrate; that stretch reads NVSSPN. Residue Ser-254 is the Nucleophile of the active site. Residues Lys-302 and Ser-330 each contribute to the FMN site. 331–332 is a substrate binding site; sequence NT. FMN-binding positions include Gly-356, Gly-386, and 407 to 408; that span reads YT.

This sequence belongs to the dihydroorotate dehydrogenase family. Type 2 subfamily. FMN serves as cofactor.

It localises to the mitochondrion inner membrane. It carries out the reaction (S)-dihydroorotate + a quinone = orotate + a quinol. It functions in the pathway pyrimidine metabolism; UMP biosynthesis via de novo pathway; orotate from (S)-dihydroorotate (quinone route): step 1/1. Functionally, catalyzes the conversion of dihydroorotate to orotate with quinone as electron acceptor. In Kluyveromyces lactis (strain ATCC 8585 / CBS 2359 / DSM 70799 / NBRC 1267 / NRRL Y-1140 / WM37) (Yeast), this protein is Dihydroorotate dehydrogenase (quinone), mitochondrial (URA9).